The chain runs to 634 residues: Probable potassium transport system protein Kup (634 aa).

12 helical membrane passes run 21–41, 61–81, 110–130, 148–168, 180–200, 217–237, 258–278, 296–316, 348–368, 377–397, 408–428, and 432–452; these read IILS…LYTL, ILSL…VAVI, IYIV…DGVI, PHMK…LFLC, FGPI…YNIA, FFLE…LAVT, WMYV…ALVL, GLYP…QALI, IYVP…VIGF, AYGV…IIYA, LWMM…ANII, and DGAW…RTWL.

This sequence belongs to the HAK/KUP transporter (TC 2.A.72) family.

Its subcellular location is the cell inner membrane. It carries out the reaction K(+)(in) + H(+)(in) = K(+)(out) + H(+)(out). In terms of biological role, transport of potassium into the cell. Likely operates as a K(+):H(+) symporter. This is Probable potassium transport system protein Kup from Xylella fastidiosa (strain 9a5c).